The chain runs to 127 residues: Ribosome-binding factor A (127 aa).

It belongs to the RbfA family. Monomer. Binds 30S ribosomal subunits, but not 50S ribosomal subunits or 70S ribosomes.

The protein localises to the cytoplasm. Its function is as follows. One of several proteins that assist in the late maturation steps of the functional core of the 30S ribosomal subunit. Associates with free 30S ribosomal subunits (but not with 30S subunits that are part of 70S ribosomes or polysomes). Required for efficient processing of 16S rRNA. May interact with the 5'-terminal helix region of 16S rRNA. The sequence is that of Ribosome-binding factor A from Geobacillus kaustophilus (strain HTA426).